We begin with the raw amino-acid sequence, 532 residues long: Spore coat protein SP85 (532 aa).

Positions 1-19 (MRLLSVLLIGFLCLAGTYA) are cleaved as a signal peptide. The N-linked (GlcNAc...) asparagine glycan is linked to Asn47. Residues 197–265 (TQSPTQPPTQ…PTQPPTQPPV (69 aa)) form a disordered region. The segment covering 201-263 (TQPPTQPPTY…YPPTQPPTQP (63 aa)) has biased composition (pro residues). Positions 267 to 289 (DCSTLECPEGFHCEIVNNRRTCV) constitute a Follistatin-like 1 domain. Residues 297-320 (THPPTQSPTYPPTQPPTQPPTYPP) are disordered. 3 consecutive Follistatin-like domains span residues 335–359 (SCDN…ARCV), 400–423 (TCDQ…VFCV), and 430–452 (TCKQ…LHCV).

As to quaternary structure, binds to cotE. Post-translationally, O-glycosylated.

The protein resides in the spore wall. In terms of biological role, required for incorporation of cotE into the spore coat and for the formation of the outer layer. Has a cross-bridging function between cellulose and other coat proteins. This is Spore coat protein SP85 (pspB) from Dictyostelium discoideum (Social amoeba).